We begin with the raw amino-acid sequence, 158 residues long: Sec-independent protein translocase protein TatB (158 aa).

Residues 2–22 traverse the membrane as a helical segment; sequence FDGIGFMELLLIGVLGLVVLG. The interval 86-158 is disordered; sequence LKQAAQSVNR…DTSSNPKANG (73 aa). Polar residues-rich tracts occupy residues 88–107, 113–136, and 143–158; these read QAAQ…SQGT, QIHS…QHLT, and EPSQ…KANG.

It belongs to the TatB family. As to quaternary structure, the Tat system comprises two distinct complexes: a TatABC complex, containing multiple copies of TatA, TatB and TatC subunits, and a separate TatA complex, containing only TatA subunits. Substrates initially bind to the TatABC complex, which probably triggers association of the separate TatA complex to form the active translocon.

It localises to the cell inner membrane. Part of the twin-arginine translocation (Tat) system that transports large folded proteins containing a characteristic twin-arginine motif in their signal peptide across membranes. Together with TatC, TatB is part of a receptor directly interacting with Tat signal peptides. TatB may form an oligomeric binding site that transiently accommodates folded Tat precursor proteins before their translocation. The polypeptide is Sec-independent protein translocase protein TatB (Shewanella putrefaciens (strain CN-32 / ATCC BAA-453)).